Consider the following 181-residue polypeptide: UPF0228 protein MA_3117 (181 aa).

The protein belongs to the UPF0228 family.

The sequence is that of UPF0228 protein MA_3117 from Methanosarcina acetivorans (strain ATCC 35395 / DSM 2834 / JCM 12185 / C2A).